A 61-amino-acid polypeptide reads, in one-letter code: Temporin-ALj (61 aa).

An N-terminal signal peptide occupies residues 1–22; the sequence is MFTLKKSLLLLFFLATINLSFC. Positions 23 to 46 are excised as a propeptide; the sequence is EQERNAEEERRDEPDERNAEVEKR. The residue at position 59 (Leu59) is a Leucine amide.

The protein belongs to the frog skin active peptide (FSAP) family. Temporin subfamily. Expressed by the skin glands.

Its subcellular location is the secreted. Its function is as follows. Antimicrobial peptide with activity against Gram-positive and Gram-negative bacteria and against fungi. Has been tested against S.aureus (MIC=7.5 ug/mL), B.pumilus (MIC=15.0 ug/mL), B.cereus (MIC=75.0 ug/mL), E.coli (MIC=15.0 ug/mL), B.dysenteriae (MIC=30.0 ug/mL), A.cacoaceticus (MIC=60.0 ug/mL), P.aeruginosa (MIC=7.5 ug/mL) and C.albicans (MIC=5.0 ug/mL). Also shows a weak hemolytic activity. The sequence is that of Temporin-ALj from Amolops loloensis (Lolokou Sucker Frog).